Here is a 141-residue protein sequence, read N- to C-terminus: HTH-type transcriptional repressor NsrR (141 aa).

The 128-residue stretch at 2–129 (QLTSFTDYGL…DNYTLADLVE (128 aa)) folds into the HTH rrf2-type domain. The segment at residues 28–51 (ISQVTEVYGVSRNHMVKIINQLSR) is a DNA-binding region (H-T-H motif). Cys-91, Cys-96, and Cys-102 together coordinate [2Fe-2S] cluster.

It depends on [2Fe-2S] cluster as a cofactor.

Its function is as follows. Nitric oxide-sensitive repressor of genes involved in protecting the cell against nitrosative stress. May require iron for activity. In Enterobacter sp. (strain 638), this protein is HTH-type transcriptional repressor NsrR.